Here is a 416-residue protein sequence, read N- to C-terminus: Tyrosine aminotransferase (416 aa).

K253 carries the N6-(pyridoxal phosphate)lysine modification.

This sequence belongs to the class-I pyridoxal-phosphate-dependent aminotransferase family. Homodimer. The cofactor is pyridoxal 5'-phosphate. In terms of processing, the N-terminus is blocked.

It is found in the cytoplasm. Its subcellular location is the mitochondrion. The enzyme catalyses L-tyrosine + 2-oxoglutarate = 3-(4-hydroxyphenyl)pyruvate + L-glutamate. The protein operates within amino-acid degradation; L-phenylalanine degradation; acetoacetate and fumarate from L-phenylalanine: step 2/6. In terms of biological role, transaminase involved in tyrosine breakdown. Converts tyrosine to p-hydroxyphenylpyruvate. This chain is Tyrosine aminotransferase, found in Trypanosoma cruzi.